The chain runs to 331 residues: Rho GTPase-activating protein 5 (331 aa).

The CRIB domain occupies 3–16 (IGGPTNIRHVAHVT). In terms of domain architecture, Rho-GAP spans 48-225 (VSTESMQLSY…LLKSLTEKTV (178 aa)). Over residues 227–251 (EREASSSVVDRRCSKEAEDGEKEKD) the composition is skewed to basic and acidic residues. A disordered region spans residues 227–331 (EREASSSVVD…VQPPICSSNP (105 aa)). Over residues 252 to 277 (NEEEEEDEEEEEEEEDEDEDEEEEGD) the composition is skewed to acidic residues.

Expressed in differentiating xylem cells.

It is found in the cell membrane. Functionally, acts as a GTPase activator for the Rac-type GTPase by converting it to an inactive GDP-bound state. The protein is Rho GTPase-activating protein 5 (ROPGAP5) of Arabidopsis thaliana (Mouse-ear cress).